The chain runs to 236 residues: Class B acid phosphatase (236 aa).

A signal peptide spans 1–22 (MKNVMKLSVIALLTAAAVPAMA). Aspartate 67 functions as the Nucleophile in the catalytic mechanism. Residues aspartate 67 and aspartate 69 each coordinate Mg(2+). The Proton donor role is filled by aspartate 69. Substrate-binding positions include 136-137 (TG) and lysine 176. Aspartate 191 lines the Mg(2+) pocket.

The protein belongs to the class B bacterial acid phosphatase family. In terms of assembly, homotetramer. Mg(2+) is required as a cofactor.

The protein resides in the periplasm. The catalysed reaction is a phosphate monoester + H2O = an alcohol + phosphate. In terms of biological role, dephosphorylates several organic phosphate monoesters. Also has a phosphotransferase activity catalyzing the transfer of low-energy phosphate groups from organic phosphate monoesters to free hydroxyl groups of various organic compounds. This is Class B acid phosphatase (aphA) from Haemophilus influenzae (strain ATCC 51907 / DSM 11121 / KW20 / Rd).